Here is a 197-residue protein sequence, read N- to C-terminus: Probable nicotinate-nucleotide adenylyltransferase (197 aa).

The protein belongs to the NadD family.

It carries out the reaction nicotinate beta-D-ribonucleotide + ATP + H(+) = deamido-NAD(+) + diphosphate. It participates in cofactor biosynthesis; NAD(+) biosynthesis; deamido-NAD(+) from nicotinate D-ribonucleotide: step 1/1. Functionally, catalyzes the reversible adenylation of nicotinate mononucleotide (NaMN) to nicotinic acid adenine dinucleotide (NaAD). This chain is Probable nicotinate-nucleotide adenylyltransferase, found in Neisseria meningitidis serogroup C (strain 053442).